The chain runs to 98 residues: NADH-ubiquinone oxidoreductase chain 4L (98 aa).

3 helical membrane passes run 1–21 (MTLI…GLLM), 29–49 (ALLC…LTIL), and 61–81 (IILL…LVMV).

The protein belongs to the complex I subunit 4L family. Core subunit of respiratory chain NADH dehydrogenase (Complex I) which is composed of 45 different subunits.

The protein localises to the mitochondrion inner membrane. The enzyme catalyses a ubiquinone + NADH + 5 H(+)(in) = a ubiquinol + NAD(+) + 4 H(+)(out). Functionally, core subunit of the mitochondrial membrane respiratory chain NADH dehydrogenase (Complex I) which catalyzes electron transfer from NADH through the respiratory chain, using ubiquinone as an electron acceptor. Part of the enzyme membrane arm which is embedded in the lipid bilayer and involved in proton translocation. This Balaenoptera physalus (Fin whale) protein is NADH-ubiquinone oxidoreductase chain 4L (MT-ND4L).